Here is a 205-residue protein sequence, read N- to C-terminus: Large ribosomal subunit protein uL3 (205 aa).

This sequence belongs to the universal ribosomal protein uL3 family. In terms of assembly, part of the 50S ribosomal subunit. Forms a cluster with proteins L14 and L19.

Its function is as follows. One of the primary rRNA binding proteins, it binds directly near the 3'-end of the 23S rRNA, where it nucleates assembly of the 50S subunit. The protein is Large ribosomal subunit protein uL3 of Bacteroides thetaiotaomicron (strain ATCC 29148 / DSM 2079 / JCM 5827 / CCUG 10774 / NCTC 10582 / VPI-5482 / E50).